A 357-amino-acid polypeptide reads, in one-letter code: Alanine racemase (357 aa).

Residue Lys-35 is the Proton acceptor; specific for D-alanine of the active site. Lys-35 carries the post-translational modification N6-(pyridoxal phosphate)lysine. Residue Arg-128 participates in substrate binding. The active-site Proton acceptor; specific for L-alanine is Tyr-254. Met-302 provides a ligand contact to substrate.

This sequence belongs to the alanine racemase family. The cofactor is pyridoxal 5'-phosphate.

The catalysed reaction is L-alanine = D-alanine. It functions in the pathway amino-acid biosynthesis; D-alanine biosynthesis; D-alanine from L-alanine: step 1/1. Its function is as follows. Catalyzes the interconversion of L-alanine and D-alanine. May also act on other amino acids. The chain is Alanine racemase (alr) from Marinobacter nauticus (strain ATCC 700491 / DSM 11845 / VT8) (Marinobacter aquaeolei).